Here is a 203-residue protein sequence, read N- to C-terminus: Guanylate kinase (203 aa).

A Guanylate kinase-like domain is found at 5–183; it reads GVLYILSAPS…AVEELKSVII (179 aa). 12 to 19 contributes to the ATP binding site; that stretch reads APSGAGKT.

It belongs to the guanylate kinase family.

It localises to the cytoplasm. The catalysed reaction is GMP + ATP = GDP + ADP. In terms of biological role, essential for recycling GMP and indirectly, cGMP. This is Guanylate kinase from Geobacter sulfurreducens (strain ATCC 51573 / DSM 12127 / PCA).